The chain runs to 522 residues: Glutamate--cysteine ligase (522 aa).

Belongs to the glutamate--cysteine ligase type 1 family. Type 1 subfamily.

It catalyses the reaction L-cysteine + L-glutamate + ATP = gamma-L-glutamyl-L-cysteine + ADP + phosphate + H(+). It participates in sulfur metabolism; glutathione biosynthesis; glutathione from L-cysteine and L-glutamate: step 1/2. The polypeptide is Glutamate--cysteine ligase (Shewanella pealeana (strain ATCC 700345 / ANG-SQ1)).